Consider the following 162-residue polypeptide: Austinoid biosynthesis clusters protein J (162 aa).

The protein belongs to the trt14 isomerase family. As to quaternary structure, homodimer.

It participates in secondary metabolite biosynthesis; terpenoid biosynthesis. Part of the gene cluster B that mediates the biosynthesis of austinol and dehydroaustinol, two fungal meroterpenoids. The first step of the pathway is the synthesis of 3,5-dimethylorsellinic acid by the polyketide synthase ausA. 3,5-dimethylorsellinic acid is then prenylated by the polyprenyl transferase ausN. Further epoxidation by the FAD-dependent monooxygenase ausM and cyclization by the probable terpene cyclase ausL lead to the formation of protoaustinoid A. Protoaustinoid A is then oxidized to spiro-lactone preaustinoid A3 by the combined action of the FAD-binding monooxygenases ausB and ausC, and the dioxygenase ausE. Acid-catalyzed keto-rearrangement and ring contraction of the tetraketide portion of preaustinoid A3 by ausJ lead to the formation of preaustinoid A4. The aldo-keto reductase ausK, with the help of ausH, is involved in the next step by transforming preaustinoid A4 into isoaustinone which is in turn hydroxylated by the P450 monooxygenase ausI to form austinolide. Finally, the cytochrome P450 monooxygenase ausG modifies austinolide to austinol. Austinol can be further modified to dehydroaustinol which forms a diffusible complex with diorcinol that initiates conidiation. Due to genetic rearrangements of the clusters and the subsequent loss of some enzymes, the end products of the Emericella nidulans austinoid biosynthesis clusters are austinol and dehydroaustinol, even if additional enzymes, such as the O-acetyltransferase ausQ and the cytochrome P450 monooxygenase ausR are still functional. The sequence is that of Austinoid biosynthesis clusters protein J from Emericella nidulans (strain FGSC A4 / ATCC 38163 / CBS 112.46 / NRRL 194 / M139) (Aspergillus nidulans).